A 232-amino-acid chain; its full sequence is CMP-N,N'-diacetyllegionaminic acid synthase (232 aa).

Belongs to the CMP-NeuNAc synthase family.

It catalyses the reaction N,N-diacetyllegionaminate + CTP = CMP-N,N-diacetyllegionaminate + diphosphate. In terms of biological role, involved in biosynthesis of legionaminic acid (5,7-diamino-3,5,7,9-tetradeoxy-D-glycero-D-galacto-non-2-ulosonic acid)(Leg), a sialic acid-like derivative that is incorporated into virulence-associated cell surface glycoconjugates such as lipopolysaccharide (LPS) which could be a key determinant in the ability of L.pneumophila to inhibit the fusion of phagosomes with lysosomes. LPS contains a majority alpha2,4-linked homomer of legionaminic acid. Catalyzes the conversion of N,N'-diacetyllegionaminic acid (Leg5Ac7Ac) and CTP into CMP-N,N'-diacetyllegionaminic acid (CMP-Leg5Ac7Ac). The chain is CMP-N,N'-diacetyllegionaminic acid synthase (neuA) from Legionella pneumophila subsp. pneumophila (strain Philadelphia 1 / ATCC 33152 / DSM 7513).